A 239-amino-acid polypeptide reads, in one-letter code: Homeobox protein Nkx-2.8 (239 aa).

Residues 1–11 (MATSGRLSFTV) are compositionally biased toward polar residues. Residues 1 to 87 (MATSGRLSFT…GSDAEKRKKR (87 aa)) form a disordered region. Basic and acidic residues predominate over residues 21–32 (DAQHLPRREPEP). Positions 62 to 79 (SPPDSSQRPSARPASPGS) are enriched in low complexity. Positions 84–143 (RKKRRVLFSKAQTLELERRFRQQRYLSAPEREQLASLLRLTPTQVKIWFQNHRYKLKRAR) form a DNA-binding region, homeobox.

This sequence belongs to the NK-2 homeobox family.

The protein localises to the nucleus. The polypeptide is Homeobox protein Nkx-2.8 (NKX2-8) (Homo sapiens (Human)).